The sequence spans 383 residues: Mannitol-1-phosphate 5-dehydrogenase (383 aa).

Position 3–14 (3–14 (AVHFGAGNIGRG)) interacts with NAD(+).

It belongs to the mannitol dehydrogenase family.

The catalysed reaction is D-mannitol 1-phosphate + NAD(+) = beta-D-fructose 6-phosphate + NADH + H(+). The sequence is that of Mannitol-1-phosphate 5-dehydrogenase from Lacticaseibacillus casei (strain BL23) (Lactobacillus casei).